The primary structure comprises 157 residues: DNA gyrase inhibitor (157 aa).

Belongs to the DNA gyrase inhibitor family. Interacts with DNA gyrase.

It is found in the cytoplasm. Functionally, inhibits the supercoiling activity of DNA gyrase. Acts by inhibiting DNA gyrase at an early step, prior to (or at the step of) binding of DNA by the gyrase. It protects cells against toxins that target DNA gyrase, by inhibiting activity of these toxins and reducing the formation of lethal double-strand breaks in the cell. The sequence is that of DNA gyrase inhibitor from Cronobacter turicensis (strain DSM 18703 / CCUG 55852 / LMG 23827 / z3032).